Here is a 156-residue protein sequence, read N- to C-terminus: Ribosomal RNA large subunit methyltransferase H (156 aa).

Residues leucine 73, glycine 104, and 123–128 (LSALTL) contribute to the S-adenosyl-L-methionine site.

Belongs to the RNA methyltransferase RlmH family. In terms of assembly, homodimer.

The protein localises to the cytoplasm. It catalyses the reaction pseudouridine(1915) in 23S rRNA + S-adenosyl-L-methionine = N(3)-methylpseudouridine(1915) in 23S rRNA + S-adenosyl-L-homocysteine + H(+). In terms of biological role, specifically methylates the pseudouridine at position 1915 (m3Psi1915) in 23S rRNA. This chain is Ribosomal RNA large subunit methyltransferase H, found in Shewanella oneidensis (strain ATCC 700550 / JCM 31522 / CIP 106686 / LMG 19005 / NCIMB 14063 / MR-1).